The chain runs to 85 residues: Large ribosomal subunit protein bL27 (85 aa).

The segment at 1–26 (MAHKKGVGSSRNGRDSNPKMLGVKRF) is disordered.

This sequence belongs to the bacterial ribosomal protein bL27 family.

The sequence is that of Large ribosomal subunit protein bL27 from Roseiflexus sp. (strain RS-1).